The following is a 90-amino-acid chain: Small ribosomal subunit protein uS15c (90 aa).

It belongs to the universal ribosomal protein uS15 family. In terms of assembly, part of the 30S ribosomal subunit.

The protein localises to the plastid. It localises to the chloroplast. This Hordeum vulgare (Barley) protein is Small ribosomal subunit protein uS15c (rps15-A).